Reading from the N-terminus, the 192-residue chain is Inosine triphosphate pyrophosphatase (192 aa).

11 to 16 (TGNKNK) contributes to the ITP binding site. Glu41 provides a ligand contact to Mg(2+). Residues Lys53, 69-70 (DT), Lys86, 146-149 (FGWD), Lys169, and 174-175 (HR) contribute to the ITP site.

It belongs to the HAM1 NTPase family. Homodimer. The cofactor is Mg(2+). It depends on Mn(2+) as a cofactor.

It localises to the cytoplasm. It catalyses the reaction ITP + H2O = IMP + diphosphate + H(+). The catalysed reaction is dITP + H2O = dIMP + diphosphate + H(+). The enzyme catalyses XTP + H2O = XMP + diphosphate + H(+). Its function is as follows. Pyrophosphatase that hydrolyzes non-canonical purine nucleotides such as inosine triphosphate (ITP), deoxyinosine triphosphate (dITP) or xanthosine 5'-triphosphate (XTP) to their respective monophosphate derivatives. The enzyme does not distinguish between the deoxy- and ribose forms. Probably excludes non-canonical purines from RNA and DNA precursor pools, thus preventing their incorporation into RNA and DNA and avoiding chromosomal lesions. The polypeptide is Inosine triphosphate pyrophosphatase (Ciona intestinalis (Transparent sea squirt)).